The primary structure comprises 416 residues: Gamma-glutamyl phosphate reductase (416 aa).

Belongs to the gamma-glutamyl phosphate reductase family.

It localises to the cytoplasm. The catalysed reaction is L-glutamate 5-semialdehyde + phosphate + NADP(+) = L-glutamyl 5-phosphate + NADPH + H(+). It participates in amino-acid biosynthesis; L-proline biosynthesis; L-glutamate 5-semialdehyde from L-glutamate: step 2/2. Its function is as follows. Catalyzes the NADPH-dependent reduction of L-glutamate 5-phosphate into L-glutamate 5-semialdehyde and phosphate. The product spontaneously undergoes cyclization to form 1-pyrroline-5-carboxylate. This chain is Gamma-glutamyl phosphate reductase, found in Streptococcus pyogenes serotype M49 (strain NZ131).